The chain runs to 375 residues: 23S rRNA (uracil(747)-C(5))-methyltransferase RlmC (375 aa).

4 residues coordinate [4Fe-4S] cluster: Cys-3, Cys-11, Cys-14, and Cys-87. S-adenosyl-L-methionine is bound by residues Gln-212, Phe-241, Glu-262, and Asn-307. Catalysis depends on Cys-334, which acts as the Nucleophile.

This sequence belongs to the class I-like SAM-binding methyltransferase superfamily. RNA M5U methyltransferase family. RlmC subfamily.

The catalysed reaction is uridine(747) in 23S rRNA + S-adenosyl-L-methionine = 5-methyluridine(747) in 23S rRNA + S-adenosyl-L-homocysteine + H(+). Its function is as follows. Catalyzes the formation of 5-methyl-uridine at position 747 (m5U747) in 23S rRNA. In Escherichia coli O45:K1 (strain S88 / ExPEC), this protein is 23S rRNA (uracil(747)-C(5))-methyltransferase RlmC.